We begin with the raw amino-acid sequence, 277 residues long: Uridine phosphorylase (277 aa).

This sequence belongs to the PNP/UDP phosphorylase family.

It is found in the cytoplasm. The catalysed reaction is uridine + phosphate = alpha-D-ribose 1-phosphate + uracil. The protein operates within pyrimidine metabolism; UMP biosynthesis via salvage pathway; uracil from uridine (phosphorylase route): step 1/1. Functionally, catalyzes the reversible phosphorylytic cleavage of uridine to uracil and ribose-1-phosphate. The sequence is that of Uridine phosphorylase from Thermococcus kodakarensis (strain ATCC BAA-918 / JCM 12380 / KOD1) (Pyrococcus kodakaraensis (strain KOD1)).